Consider the following 144-residue polypeptide: 3-hydroxyacyl-[acyl-carrier-protein] dehydratase FabZ (144 aa).

His51 is an active-site residue.

This sequence belongs to the thioester dehydratase family. FabZ subfamily.

The protein localises to the cytoplasm. The catalysed reaction is a (3R)-hydroxyacyl-[ACP] = a (2E)-enoyl-[ACP] + H2O. Involved in unsaturated fatty acids biosynthesis. Catalyzes the dehydration of short chain beta-hydroxyacyl-ACPs and long chain saturated and unsaturated beta-hydroxyacyl-ACPs. The polypeptide is 3-hydroxyacyl-[acyl-carrier-protein] dehydratase FabZ (Clostridium botulinum (strain Okra / Type B1)).